The chain runs to 273 residues: Dermonecrotic toxin LarSicTox-alphaIB1b (273 aa).

H5 is an active-site residue. 2 residues coordinate Mg(2+): E25 and D27. Catalysis depends on H41, which acts as the Nucleophile. Cystine bridges form between C45-C51 and C47-C190. D85 provides a ligand contact to Mg(2+). A glycan (N-linked (GlcNAc...) asparagine) is linked at N250.

The protein belongs to the arthropod phospholipase D family. Class II subfamily. Mg(2+) is required as a cofactor. Expressed by the venom gland.

The protein localises to the secreted. It catalyses the reaction an N-(acyl)-sphingosylphosphocholine = an N-(acyl)-sphingosyl-1,3-cyclic phosphate + choline. It carries out the reaction an N-(acyl)-sphingosylphosphoethanolamine = an N-(acyl)-sphingosyl-1,3-cyclic phosphate + ethanolamine. The enzyme catalyses a 1-acyl-sn-glycero-3-phosphocholine = a 1-acyl-sn-glycero-2,3-cyclic phosphate + choline. The catalysed reaction is a 1-acyl-sn-glycero-3-phosphoethanolamine = a 1-acyl-sn-glycero-2,3-cyclic phosphate + ethanolamine. Its function is as follows. Dermonecrotic toxins cleave the phosphodiester linkage between the phosphate and headgroup of certain phospholipids (sphingolipid and lysolipid substrates), forming an alcohol (often choline) and a cyclic phosphate. This toxin acts on sphingomyelin (SM). It may also act on ceramide phosphoethanolamine (CPE), lysophosphatidylcholine (LPC) and lysophosphatidylethanolamine (LPE), but not on lysophosphatidylserine (LPS), and lysophosphatidylglycerol (LPG). It acts by transphosphatidylation, releasing exclusively cyclic phosphate products as second products. Induces dermonecrosis, hemolysis, increased vascular permeability, edema, inflammatory response, and platelet aggregation. This chain is Dermonecrotic toxin LarSicTox-alphaIB1b, found in Loxosceles arizonica (Arizona brown spider).